Here is a 280-residue protein sequence, read N- to C-terminus: Phosphatidylserine decarboxylase proenzyme (280 aa).

Active-site charge relay system; for autoendoproteolytic cleavage activity residues include Asp88, His144, and Ser247. Ser247 (schiff-base intermediate with substrate; via pyruvic acid; for decarboxylase activity) is an active-site residue. Ser247 carries the pyruvic acid (Ser); by autocatalysis modification.

Belongs to the phosphatidylserine decarboxylase family. PSD-B subfamily. Prokaryotic type I sub-subfamily. In terms of assembly, heterodimer of a large membrane-associated beta subunit and a small pyruvoyl-containing alpha subunit. The cofactor is pyruvate. Post-translationally, is synthesized initially as an inactive proenzyme. Formation of the active enzyme involves a self-maturation process in which the active site pyruvoyl group is generated from an internal serine residue via an autocatalytic post-translational modification. Two non-identical subunits are generated from the proenzyme in this reaction, and the pyruvate is formed at the N-terminus of the alpha chain, which is derived from the carboxyl end of the proenzyme. The autoendoproteolytic cleavage occurs by a canonical serine protease mechanism, in which the side chain hydroxyl group of the serine supplies its oxygen atom to form the C-terminus of the beta chain, while the remainder of the serine residue undergoes an oxidative deamination to produce ammonia and the pyruvoyl prosthetic group on the alpha chain. During this reaction, the Ser that is part of the protease active site of the proenzyme becomes the pyruvoyl prosthetic group, which constitutes an essential element of the active site of the mature decarboxylase.

Its subcellular location is the cell membrane. The catalysed reaction is a 1,2-diacyl-sn-glycero-3-phospho-L-serine + H(+) = a 1,2-diacyl-sn-glycero-3-phosphoethanolamine + CO2. It participates in phospholipid metabolism; phosphatidylethanolamine biosynthesis; phosphatidylethanolamine from CDP-diacylglycerol: step 2/2. Catalyzes the formation of phosphatidylethanolamine (PtdEtn) from phosphatidylserine (PtdSer). The protein is Phosphatidylserine decarboxylase proenzyme of Xanthomonas axonopodis pv. citri (strain 306).